A 67-amino-acid polypeptide reads, in one-letter code: ATP synthase F(0) complex subunit 8 (67 aa).

Residues 8-24 (TWSITIMSMIMTLFIVF) traverse the membrane as a helical segment. Residue Lys-54 is modified to N6-acetyllysine; alternate. An N6-succinyllysine; alternate modification is found at Lys-54. Lys-57 is subject to N6-acetyllysine.

This sequence belongs to the ATPase protein 8 family. In terms of assembly, component of the ATP synthase complex composed at least of ATP5F1A/subunit alpha, ATP5F1B/subunit beta, ATP5MC1/subunit c (homooctomer), MT-ATP6/subunit a, MT-ATP8/subunit 8, ATP5ME/subunit e, ATP5MF/subunit f, ATP5MG/subunit g, ATP5MK/subunit k, ATP5MJ/subunit j, ATP5F1C/subunit gamma, ATP5F1D/subunit delta, ATP5F1E/subunit epsilon, ATP5PF/subunit F6, ATP5PB/subunit b, ATP5PD/subunit d, ATP5PO/subunit OSCP. ATP synthase complex consists of a soluble F(1) head domain (subunits alpha(3) and beta(3)) - the catalytic core - and a membrane F(0) domain - the membrane proton channel (subunits c, a, 8, e, f, g, k and j). These two domains are linked by a central stalk (subunits gamma, delta, and epsilon) rotating inside the F1 region and a stationary peripheral stalk (subunits F6, b, d, and OSCP). Interacts with PRICKLE3.

The protein resides in the mitochondrion membrane. In terms of biological role, subunit 8, of the mitochondrial membrane ATP synthase complex (F(1)F(0) ATP synthase or Complex V) that produces ATP from ADP in the presence of a proton gradient across the membrane which is generated by electron transport complexes of the respiratory chain. ATP synthase complex consist of a soluble F(1) head domain - the catalytic core - and a membrane F(1) domain - the membrane proton channel. These two domains are linked by a central stalk rotating inside the F(1) region and a stationary peripheral stalk. During catalysis, ATP synthesis in the catalytic domain of F(1) is coupled via a rotary mechanism of the central stalk subunits to proton translocation. In vivo, can only synthesize ATP although its ATP hydrolase activity can be activated artificially in vitro. Part of the complex F(0) domain. The protein is ATP synthase F(0) complex subunit 8 of Felis catus (Cat).